The chain runs to 241 residues: Triosephosphate isomerase (241 aa).

Residue 9–11 (NWK) participates in substrate binding. His-96 serves as the catalytic Electrophile. Glu-165 serves as the catalytic Proton acceptor. Residues Gly-171, Ser-204, and 225 to 226 (GG) contribute to the substrate site.

The protein belongs to the triosephosphate isomerase family. In terms of assembly, homodimer.

It localises to the cytoplasm. It catalyses the reaction D-glyceraldehyde 3-phosphate = dihydroxyacetone phosphate. It functions in the pathway carbohydrate biosynthesis; gluconeogenesis. Its pathway is carbohydrate degradation; glycolysis; D-glyceraldehyde 3-phosphate from glycerone phosphate: step 1/1. In terms of biological role, involved in the gluconeogenesis. Catalyzes stereospecifically the conversion of dihydroxyacetone phosphate (DHAP) to D-glyceraldehyde-3-phosphate (G3P). The sequence is that of Triosephosphate isomerase from Picosynechococcus sp. (strain ATCC 27264 / PCC 7002 / PR-6) (Agmenellum quadruplicatum).